Consider the following 489-residue polypeptide: Protein DETOXIFICATION 26 (489 aa).

A run of 12 helical transmembrane segments spans residues 42–62, 75–95, 125–145, 157–177, 190–210, 217–237, 271–291, 300–320, 342–362, 385–405, 416–436, and 442–462; these read IWYI…ILII, LAAI…LLLG, IILF…TPIL, LTGT…FFFP, VIAI…WFFV, IIGT…ILFL, IMLC…GNLV, LSIC…FFAG, IVSI…IVIF, VLLA…GVAV, INLG…GWIF, and GIWA…LIII.

It belongs to the multi antimicrobial extrusion (MATE) (TC 2.A.66.1) family.

The protein localises to the membrane. This is Protein DETOXIFICATION 26 from Arabidopsis thaliana (Mouse-ear cress).